The following is a 2624-amino-acid chain: MFRRARLSVKPNVRPGVGARGSTASNPQRGRESPRPPDPATDSASKPAEPTDVPTVDFGGAEPQEKAPRSSTEKTGGDNDVEESSRSSSTVSQRRKRISSTSSLVKSSVSVPSESHPLSTINQEAPQPTATSTKEKQPCSDRYRIYKAQKLREMLKEELRKEKKQWKNKYAINESQRPPDRSKMTMRDFIYYLPDNNPMTSSLEQEKKTEKPSTPVQTREQEGKSTPNAEDNEMEEETDDGPLLVPRVKVAEDGSIILDEESLTVEVLRTKGPCVVEENDPIFERGSTTTYSSFRKNYYSKPWSNKETDMFFLAISMVGTDFSMIGQLFPHRARIEIKNKFKREEKTNGWRIDKAFQEKRPFDFDFFAHLLQKVLAEEEKRKQKSVKNHSLKEKKSTKPRKNVKVKKVACEGVNNDPDESMSSRISDTERSQKDAQTVEEESLTLSREDAEQVALEVDLNQKKRRRKKQDGANELGVNNLLENATVQAGPSKGEKHKNKCQAIRPELKEGECSKEQMLSCTQNIDGIVGFASTEKVEKRTDPILSLSNQQDATSVATESSESSTSDLPSFEVGIRALCEVNNAEGSCIEERNVDLKNNSLEIDQTENVKPMLRGRFQRPKPNLSRAGKKSVLSQGKTESESKNSHSKTSVEKNHVEKDKMNTLDILRMETTERENPEAETVSVLGEKNCLQEGSQLKALRPVQVRGRLQKPKPNAGKAAERKEILISQEEIGANVEKNENESCADRDTPQHMEDQSRKDFEEEDVILQPEKNDSFQNVQPDEPKVLNECLSVQENNKANKLNQVPILRTRFQKPKPNIGRGTGRREISSKEEVLEKILVSGEMAAALRETVRLDTSPKEMVPAEINTKEMQSDLKETGRRAISPREKILDVIDDTIEMETGLKAMGREICLREKTPEVIDATEEIDKDLEEAGRREISPQKNGPEEVKPLGEVETDLKATGNESSPREKTPEVTDATEEIDKNLEETGRRKISPRENGPEEVKPVDEMETDLNATGRESSPREKTPEVIDATEEIDLEETEREVSPQENGLEEVKPLGEMETDLKATGRDSFPRGKTPEVIDAIEEIEIDLEETEREISPQENGLEEVKPLGEMQTDLKATGREISPREKTPEVIDATEEIDKDLEETGRREISPEENGPEEVKPVDEMETDLKTTGREGSSREKTREVIDAAEVIETDLEETEREISPQENGPEEVKPVGKMETDLKEIREEISQREKVLAEFSAIREKEIDLKETGKRDIPIMEKVSGKMAVVEEMEADLKETGKENFRERGSEEICVTEEKVAELKQTGKTDISPRENELEETSTSRQTDTHLMQSGSNDFSAVPSLDIQNISSEVLSMMHTPVEEKRNSEKEVSSHFSHFKISSQTHESDKTEVQGIQSPDVPEQFSDINLSKSLPQEQKPLEIKPAPFVRSRFKRPKPNLARAALKRETTESEKYIYEKKSETKKMETIVMQENNEQTDTLPSQHDEASLMISREKDTLGHRNEEAVILPCTQTERNLSPSNSCEPKEESQSAPVQKNDSVVSVGTNNVNTFQQEMKESVIQTARQVRGRLQRPRPNIRKTGQRQIVDKGEAKGIIKEGRTILPKDETEKKVLTVSNSQIETEIEVPSSAVPEHRMYENQSQVVLVENLHVNKTNETIRHENKPYVPSSAQMTRRKFQKAKPNLGRAHSKKEEPVLEKVTTDQSKEGKPEDHLLQKGASNTQLLLKEKAELLTSLEVSARKDCVGSKESALAKIDAELEEVGPSRRVGEETVGDNSPSSVVEEQYLNKLTSCPQPLNETSYSKIALDGKTTISSTSEYERNRGERRSHKKFKPNVTRGRGSKRVRGKTSKKEPRASKAMLVTLRASQEEDDDADDFESDYEEESYHLAPEEVNKAPVFVPVGLRSPEPVSAQIEETMEELEITVNVPDVGCIAVVEHELPNTDVTTEEMKQEENLSVPFEMTTSEHIQDEPGTNDGSTEAAITLLTMGDLVLQSEISSEQGDVGVCIIPHVHSKDKSHIPSSLDNVNHKIVHECQELSSPVITTSPASFEENKIVLEEQSSREEISLMEKVKENATPTRNTISKVTSNLRIRSRLAKPKPNLEKTLGTNRLDDYQEVSSLCVTKGAEMETQRETEKNASKATELENKNLGPVTTAENKDQSKLACVHGIKGTSISSEVNLTERNENQEESSQEVHMLSVAPVASSETGPCTLGLDRGLGENSVEEPQIKDSKGDSVLTLPVPEYTPTSIPEVQQENIINPQDLTVNLVANVPQDGEDEQAFILTLVEIPANAVEEFTDATAQFMPNPLLPAPILVKSVNTEERGDMSICLPATSVGQDAMGLSISGRDNSKKPPDNLDLVSRKRFQCRLDKNDHIPPAKKRSLTLRDDCQEYTTEVHSKELTNVFEETGESHKGQDIFLTSGSTLTTPEPQRQQVEAAFQSRGSRSPDACMDKNVPQLPQDEMIVSDKEERTDAAPKSQQMDSRTSSSKASLSRPGRRPLGFLSLICSKNSLESDEPMQVHSKKRLKPLIPGLRKKLKRSNPFNESQEKNRESSDLLPSPSVITTQSENISSSATQVSCDQPLLKEGYKSAQKRAPQGEATTVSEYFFNDIFIEVDETE.

The segment at 1 to 142 (MFRRARLSVK…TKEKQPCSDR (142 aa)) is disordered. An interaction with ZBTB43 region spans residues 1–299 (MFRRARLSVK…TYSSFRKNYY (299 aa)). Over residues 63–77 (PQEKAPRSSTEKTGG) the composition is skewed to basic and acidic residues. A compositionally biased stretch (low complexity) spans 99–119 (SSTSSLVKSSVSVPSESHPLS). The segment covering 120 to 132 (TINQEAPQPTATS) has biased composition (polar residues). A compositionally biased stretch (basic and acidic residues) spans 133 to 142 (TKEKQPCSDR). Positions 144–177 (RIYKAQKLREMLKEELRKEKKQWKNKYAINESQR) form a coiled coil. A disordered region spans residues 193–241 (LPDNNPMTSSLEQEKKTEKPSTPVQTREQEGKSTPNAEDNEMEEETDDG). The segment covering 212-229 (PSTPVQTREQEGKSTPNA) has biased composition (polar residues). Acidic residues predominate over residues 230-240 (EDNEMEEETDD). A Myb-like domain is found at 295-345 (RKNYYSKPWSNKETDMFFLAISMVGTDFSMIGQLFPHRARIEIKNKFKREE). Residues 355 to 470 (AFQEKRPFDF…QKKRRRKKQD (116 aa)) are required for phosphorylation by CSNK2A1. Disordered regions lie at residues 379-449 (EKRK…SRED), 544-567 (LSLS…TSDL), 606-663 (ENVK…MNTL), and 729-759 (EEIG…SRKD). Over residues 397–407 (TKPRKNVKVKK) the composition is skewed to basic residues. Over residues 552–565 (ATSVATESSESSTS) the composition is skewed to low complexity. Composition is skewed to basic and acidic residues over residues 637–663 (TESE…MNTL) and 736–759 (EKNE…SRKD). One copy of the 1; approximate repeat lies at 823–877 (GRREISSKEEVLEKILVSGEMAAALRETVRLDTSPKEMVPAEINTKEMQSDLKET). Residues 823 to 1327 (GRREISSKEE…PRENELEETS (505 aa)) form a 9 X 55 AA repeats of G-R-R-X-I-S-P-X-E-N-G-X-E-E-V-K-P-X-X-E-M-E-T-D-L-K-X-T-G-R-E-X-X-X-R-E-K-T-X-E-X-X-D-A-X-E-E-I-D-X-D-L-E-E-T region. 6 tandem repeats follow at residues 878-932 (GRRA…LEEA), 933-987 (GRRE…LEET), 988-1040 (GRRK…LEET), 1041-1094 (EREV…LEET), 1095-1148 (EREI…LEET), and 1149-1203 (GRRE…LEET). Threonine 915 is modified (phosphothreonine). Basic and acidic residues-rich tracts occupy residues 930–957 (EEAG…ETDL) and 979–1006 (EIDK…KPVD). The interval 930–1222 (EEAGRREISP…GPEEVKPVGK (293 aa)) is disordered. Over residues 1030–1041 (DATEEIDLEETE) the composition is skewed to acidic residues. Positions 1052–1079 (EEVKPLGEMETDLKATGRDSFPRGKTPE) are enriched in basic and acidic residues. Residues 1078-1103 (PEVIDAIEEIEIDLEETEREISPQEN) adopt a coiled-coil conformation. Acidic residues predominate over residues 1082–1095 (DAIEEIEIDLEETE). Over residues 1120-1133 (ATGREISPREKTPE) the composition is skewed to basic and acidic residues. The span at 1136 to 1145 (DATEEIDKDL) shows a compositional bias: acidic residues. Positions 1161-1190 (EEVKPVDEMETDLKTTGREGSSREKTREVI) are enriched in basic and acidic residues. A compositionally biased stretch (acidic residues) spans 1194–1204 (EVIETDLEETE). One copy of the 8; approximate repeat lies at 1204–1257 (EREISPQENGPEEVKPVGKMETDLKEIREEISQREKVLAEFSAIREKEIDLKET). Residues 1223–1284 (METDLKEIRE…VEEMEADLKE (62 aa)) adopt a coiled-coil conformation. The 9; approximate repeat unit spans residues 1258–1327 (GKRDIPIMEK…PRENELEETS (70 aa)). A compositionally biased stretch (basic and acidic residues) spans 1306–1321 (AELKQTGKTDISPREN). 10 disordered regions span residues 1306 to 1348 (AELK…SAVP), 1365 to 1440 (TPVE…RFKR), 1519 to 1543 (TERN…VQKN), 1684 to 1722 (KAKP…LQKG), 1819 to 1863 (STSE…ASKA), 2130 to 2164 (GAEM…ENKD), 2181 to 2200 (SEVN…QEVH), 2207 to 2241 (VASS…GDSV), 2444 to 2501 (FQSR…SRPG), and 2519 to 2566 (SDEP…PSPS). The segment covering 1326 to 1344 (TSTSRQTDTHLMQSGSNDF) has biased composition (polar residues). Residues 1366-1378 (PVEEKRNSEKEVS) show a composition bias toward basic and acidic residues. Polar residues-rich tracts occupy residues 1379 to 1390 (SHFSHFKISSQT), 1411 to 1421 (SDINLSKSLPQ), and 1519 to 1529 (TERNLSPSNSC). Basic and acidic residues predominate over residues 1695–1719 (KKEEPVLEKVTTDQSKEGKPEDHLL). Positions 1844–1853 (RGSKRVRGKT) are enriched in basic residues. Positions 2131-2151 (AEMETQRETEKNASKATELEN) are enriched in basic and acidic residues. Residues 2470–2479 (VSDKEERTDA) are compositionally biased toward basic and acidic residues. The segment covering 2488 to 2498 (SRTSSSKASLS) has biased composition (low complexity). The segment covering 2526-2544 (HSKKRLKPLIPGLRKKLKR) has biased composition (basic residues).

As to quaternary structure, component of TFIIIB complex. The TFIIIB complex has two activities, alpha and beta. The TFIIIB-alpha and TFIIIB-beta activities are required for transcription of genes with TFIIIC-bound internal promoters and PSE transcription factor-bound external promoters, respectively. The TFIIIB-alpha activity complex is composed of TBP, BDP1, and a complex containing both BRF2 and at least four stably associated proteins; YY1 facilitates the formation of TFIIIB-alpha activity complex. The TFIIIB-beta activity complex is composed of TBP, BDP1, and BRF1. Interacts with BRF1; this interaction diminishes during mitosis resulting in the release of BDP1 from chromosomal templates. Component of TFIIIC complex. The TFIIIC complex has two activities, C1 and C2. The TFIIIC2 activity complex is only required for transcription of the 'classical' pol III genes whereas the TFIIIC1 activity complex is required for transcription of all pol III genes. The TFIIIC1 activity complex is composed at least of BDP1. Interacts with ZBTB43. Phosphorylated by CSNK2A1 during mitosis, resulting in its release from chromatin and suppression of polymerase III transcription. Isoform 2 is highly expressed in cerebellum.

It is found in the nucleus. Its function is as follows. General activator of RNA polymerase III transcription. Requires for transcription from all three types of polymerase III promoters. Requires for transcription of genes with internal promoter elements and with promoter elements upstream of the initiation site. The protein is Transcription factor TFIIIB component B'' homolog (BDP1) of Homo sapiens (Human).